The following is a 493-amino-acid chain: Cytochrome P450 710A3 (493 aa).

A helical transmembrane segment spans residues 5 to 25; it reads VSLFASLTPYLVSALLLFLLL. Position 435 (C435) interacts with heme.

It belongs to the cytochrome P450 family. The cofactor is heme. Expressed in stems. Detected in primary root caps and immature petals.

Its subcellular location is the membrane. It catalyses the reaction 5-dehydroepisterol + NADPH + O2 + H(+) = ergosta-5,7,22,24(28)-tetraen-3beta-ol + NADP(+) + 2 H2O. In terms of biological role, required to form the C-22 double bond in the sterol side chain. Possesses in vitro C-22 desaturase activity toward beta-sitosterol and produces stigmasterol. The polypeptide is Cytochrome P450 710A3 (Arabidopsis thaliana (Mouse-ear cress)).